The primary structure comprises 3147 residues: Bassianolide nonribosomal cyclodepsipeptide synthetase (3147 aa).

Positions 1 to 12 (MEPPNNANTGQL) are enriched in polar residues. A disordered region spans residues 1–23 (MEPPNNANTGQLGPTLPNGTVDL). The tract at residues 69–454 (HVVYEIPEDV…INKLQSTDGS (386 aa)) is condensation 1. Residues 495 to 887 (DDTPNKPAVC…GRMDSQVKIR (393 aa)) form an adenylation 1 region. A Carrier 1 domain is found at 1015-1091 (PDASAGVTKL…SLQAAIGGSS (77 aa)). S1052 is subject to O-(pantetheine 4'-phosphoryl)serine. A condensation 2 region spans residues 1109-1538 (SYSQGRLWFL…QTLISVVPLT (430 aa)). The adenylation 2 stretch occupies residues 1567–1973 (FATQVASYPD…GRMDFQFKIR (407 aa)). The S-adenosyl-L-methionine-dependent N-methyltransferase (MT) stretch occupies residues 2041–2181 (TYTELDTVSS…FPTRDYLEQV (141 aa)). Carrier domains lie at 2515–2589 (FPLS…RQQL) and 2615–2689 (APTT…EVSQ). S2549 and S2649 each carry O-(pantetheine 4'-phosphoryl)serine. The condensation 3 stretch occupies residues 2735-3139 (QDVYLATHLQ…THLMEQVCNT (405 aa)).

Belongs to the NRP synthetase family.

Functionally, bassianolide nonribosomal synthetase that mediates the biosynthesis of bassianolide (BSL), a non-ribosomal cyclodepsipeptide that shows insecticidal and cancer cell antiproliferative activity. BSLS first catalyzes the iterative synthesis of an enzyme-bound dipeptidol monomer intermediate from D-2-hydroxyisovalerate and L-leucine before performing the condensation and cyclization of 4 dipeptidol monomers to yield the cyclic tetrameric ester bassianolide. The N-methyltransferase MT domain is responsible for the methylation of the leucine residues of bassianolide. BSLS is flexible with both the amino acid and hydroxyl acid precursors, and produces bassianolide as the major product (containing N-methyl-L-Leu), together with small amounts of beauvericin and its analogs beauvericins A-C (containing N-methyl-L-Phe). In Beauveria bassiana (strain ARSEF 2860) (White muscardine disease fungus), this protein is Bassianolide nonribosomal cyclodepsipeptide synthetase.